We begin with the raw amino-acid sequence, 227 residues long: MTDSNRGGAAAHSLHAGVYPGNLFMVVAPSGAGKSTLVNALLSKDPEICLSISYTTRKPRSGEQDGQHYHFTTVEDFRARHASHEFLESAEVHGNYYGTSRVWIEEQMKSGHDVLLEIDWQGAQQVKKQFRNAVGIFILPPSLAALEERLKKRGQDEPNVITRRLLAAGSEIAHAAEAEYVVINETFEHALAELECIVAATRLRFTSQYARHAELFVELGIHLPHAE.

The 179-residue stretch at G21–A199 folds into the Guanylate kinase-like domain. A28–S35 provides a ligand contact to ATP.

Belongs to the guanylate kinase family.

The protein localises to the cytoplasm. It catalyses the reaction GMP + ATP = GDP + ADP. Functionally, essential for recycling GMP and indirectly, cGMP. The protein is Guanylate kinase of Burkholderia thailandensis (strain ATCC 700388 / DSM 13276 / CCUG 48851 / CIP 106301 / E264).